Consider the following 522-residue polypeptide: Sulfite reductase [NADPH] flavoprotein alpha-component (522 aa).

A Flavodoxin-like domain is found at 60–198; sequence ITILFGSQTG…DTERWSSDAL (139 aa). Residues 217 to 242 are disordered; it reads TLRSHQDLRSHQEQSRNRARPYDKDN. Over residues 220–242 the composition is skewed to basic and acidic residues; it reads SHQDLRSHQEQSRNRARPYDKDN. Positions 241-399 constitute an FAD-binding FR-type domain; it reads DNPYTATLLE…VAPYRAFLQQ (159 aa).

As to quaternary structure, alpha(8)-beta(8). The alpha component is a flavoprotein, the beta component is a hemoprotein. Requires FAD as cofactor. It depends on FMN as a cofactor.

The enzyme catalyses hydrogen sulfide + 3 NADP(+) + 3 H2O = sulfite + 3 NADPH + 4 H(+). Its function is as follows. Catalyzes the 6-electron reduction of sulfite to sulfide. This is one of several activities required for the biosynthesis of L-cysteine from sulfate. The flavo-protein component catalyzes the electron flow from NADPH -&gt; FAD -&gt; FMN to the hemoprotein component. This is Sulfite reductase [NADPH] flavoprotein alpha-component (cysJ) from Thiocapsa roseopersicina.